Consider the following 122-residue polypeptide: Large ribosomal subunit protein uL14 (122 aa).

It belongs to the universal ribosomal protein uL14 family. Part of the 50S ribosomal subunit. Forms a cluster with proteins L3 and L19. In the 70S ribosome, L14 and L19 interact and together make contacts with the 16S rRNA in bridges B5 and B8.

Functionally, binds to 23S rRNA. Forms part of two intersubunit bridges in the 70S ribosome. This chain is Large ribosomal subunit protein uL14, found in Xylella fastidiosa (strain 9a5c).